A 141-amino-acid chain; its full sequence is Hemoglobin subunit alpha (141 aa).

Residues 1–141 (VLSAADKTAI…VATALGSHYR (141 aa)) form the Globin domain. H59 contacts O2. H88 contributes to the heme b binding site.

Belongs to the globin family. In terms of assembly, heterotetramer of two alpha chains and two beta chains. As to expression, red blood cells.

Its function is as follows. Involved in oxygen transport from the lung to the various peripheral tissues. This chain is Hemoglobin subunit alpha (HBA), found in Squalus acanthias (Spiny dogfish).